The chain runs to 331 residues: Cytosolic sulfotransferase 8 (331 aa).

Positions 1 to 11 (MGEKDIPRNLK) are enriched in basic and acidic residues. The tract at residues 1–31 (MGEKDIPRNLKEEEEEEEENQSEETKSLISS) is disordered. The span at 12–22 (EEEEEEEENQS) shows a compositional bias: acidic residues. 80–85 (KSGTTW) serves as a coordination point for 3'-phosphoadenylyl sulfate. His145 functions as the Proton acceptor in the catalytic mechanism. 3'-phosphoadenylyl sulfate-binding positions include Arg167, Ser175, Tyr231, and 297–299 (RKG).

The protein belongs to the sulfotransferase 1 family. Expressed in seedlings and roots.

It localises to the cytoplasm. Sulfotransferase that utilizes 3'-phospho-5'-adenylyl sulfate (PAPS) as sulfonate donor. No activity with brassinosteroids. This is Cytosolic sulfotransferase 8 (SOT8) from Arabidopsis thaliana (Mouse-ear cress).